The chain runs to 193 residues: Peptidyl-tRNA hydrolase (193 aa).

Tyr-17 contributes to the tRNA binding site. His-22 functions as the Proton acceptor in the catalytic mechanism. TRNA-binding residues include Phe-68, Asn-70, and Asn-116.

This sequence belongs to the PTH family. In terms of assembly, monomer.

Its subcellular location is the cytoplasm. The enzyme catalyses an N-acyl-L-alpha-aminoacyl-tRNA + H2O = an N-acyl-L-amino acid + a tRNA + H(+). In terms of biological role, hydrolyzes ribosome-free peptidyl-tRNAs (with 1 or more amino acids incorporated), which drop off the ribosome during protein synthesis, or as a result of ribosome stalling. Its function is as follows. Catalyzes the release of premature peptidyl moieties from peptidyl-tRNA molecules trapped in stalled 50S ribosomal subunits, and thus maintains levels of free tRNAs and 50S ribosomes. The polypeptide is Peptidyl-tRNA hydrolase (Acinetobacter baylyi (strain ATCC 33305 / BD413 / ADP1)).